Consider the following 174-residue polypeptide: Shikimate kinase (174 aa).

15–20 (GTGKST) contributes to the ATP binding site. Residue S19 participates in Mg(2+) binding. D37, R61, and G82 together coordinate substrate. R120 contributes to the ATP binding site. Residue R138 coordinates substrate.

The protein belongs to the shikimate kinase family. As to quaternary structure, monomer. It depends on Mg(2+) as a cofactor.

The protein localises to the cytoplasm. It catalyses the reaction shikimate + ATP = 3-phosphoshikimate + ADP + H(+). It participates in metabolic intermediate biosynthesis; chorismate biosynthesis; chorismate from D-erythrose 4-phosphate and phosphoenolpyruvate: step 5/7. In terms of biological role, catalyzes the specific phosphorylation of the 3-hydroxyl group of shikimic acid using ATP as a cosubstrate. The sequence is that of Shikimate kinase from Staphylococcus aureus (strain MRSA252).